Consider the following 185-residue polypeptide: Transcription factor E (185 aa).

Positions 5-88 (KNKELLEIAQ…YWRLETKKLP (84 aa)) constitute an HTH TFE/IIEalpha-type domain.

This sequence belongs to the TFE family. Monomer. Interaction with RNA polymerase subunits RpoF and RpoE is necessary for Tfe stimulatory transcription activity. Able to interact with Tbp and RNA polymerase in the absence of DNA promoter. Interacts both with the preinitiation and elongation complexes.

Its function is as follows. Transcription factor that plays a role in the activation of archaeal genes transcribed by RNA polymerase. Facilitates transcription initiation by enhancing TATA-box recognition by TATA-box-binding protein (Tbp), and transcription factor B (Tfb) and RNA polymerase recruitment. Not absolutely required for transcription in vitro, but particularly important in cases where Tbp or Tfb function is not optimal. It dynamically alters the nucleic acid-binding properties of RNA polymerases by stabilizing the initiation complex and destabilizing elongation complexes. Seems to translocate with the RNA polymerase following initiation and acts by binding to the non template strand of the transcription bubble in elongation complexes. The polypeptide is Transcription factor E (Thermococcus kodakarensis (strain ATCC BAA-918 / JCM 12380 / KOD1) (Pyrococcus kodakaraensis (strain KOD1))).